The following is a 79-amino-acid chain: Cyclotide phyb-A (79 aa).

A propeptide spanning residues 1–43 (MVGVNSLRSALYLIVLILFVQLTYFSDARVMDVDLSRAFLPLT) is cleaved from the precursor. A cross-link (cyclopeptide (Gly-Asn)) is located at residues 44-73 (GIGCGESCVWIPCVSAAIGCSCSNKICYRN). Cystine bridges form between cysteine 47-cysteine 63, cysteine 51-cysteine 65, and cysteine 56-cysteine 70. Residues 74–79 (GIIPKK) constitute a propeptide that is removed on maturation.

Post-translationally, this is a cyclic peptide. Contains 3 disulfide bonds. In terms of tissue distribution, expressed in midvein, lamina and periphery of leaves (at protein level).

Probably participates in a plant defense mechanism. The chain is Cyclotide phyb-A from Petunia hybrida (Petunia).